A 1096-amino-acid chain; its full sequence is DNA-directed RNA polymerase subunit beta (1096 aa).

Positions 1069–1096 are disordered; the sequence is DLMQDVNPRRSTPSRPTYESLGSDYQED.

This sequence belongs to the RNA polymerase beta chain family. In terms of assembly, in cyanobacteria the RNAP catalytic core is composed of 2 alpha, 1 beta, 1 beta', 1 gamma and 1 omega subunit. When a sigma factor is associated with the core the holoenzyme is formed, which can initiate transcription.

The enzyme catalyses RNA(n) + a ribonucleoside 5'-triphosphate = RNA(n+1) + diphosphate. Its function is as follows. DNA-dependent RNA polymerase catalyzes the transcription of DNA into RNA using the four ribonucleoside triphosphates as substrates. The chain is DNA-directed RNA polymerase subunit beta from Prochlorococcus marinus (strain SARG / CCMP1375 / SS120).